Reading from the N-terminus, the 124-residue chain is MMSENITAVEPQENNDVEADSDPFNIDKLIVDYDYLLYKIQDELESIQLKTLEICQKQNEIVEHGIIEEVIDGNIGMAKDLLQKCDDLEKHYDQLDAVEGIVVSFKSRLKGVITQYKKYIDTKK.

The tract at residues 1–20 (MMSENITAVEPQENNDVEAD) is disordered. Residues 75-98 (IGMAKDLLQKCDDLEKHYDQLDAV) adopt a coiled-coil conformation.

Belongs to the BLOC1S4 family. Component of the biogenesis of lysosome-related organelles complex-1 (BLOC-1).

The protein resides in the cytoplasm. Its function is as follows. Component of the biogenesis of lysosome-related organelles complex-1 (BLOC-1), a complex that is involved in endosomal cargo sorting. This is Biogenesis of lysosome-related organelles complex 1 subunit CNL1 (CLN1) from Kluyveromyces lactis (strain ATCC 8585 / CBS 2359 / DSM 70799 / NBRC 1267 / NRRL Y-1140 / WM37) (Yeast).